The chain runs to 271 residues: GPN-loop GTPase 3 (271 aa).

GTP is bound at residue 13–18 (GVGKST). Residues 70–72 (GPN) carry the Gly-Pro-Asn (GPN)-loop; involved in dimer interface motif. 173-176 (SKMD) contributes to the GTP binding site.

The protein belongs to the GPN-loop GTPase family. In terms of assembly, heterodimers with GPN1 or GPN2. Binds to RNA polymerase II (RNAPII).

Functionally, small GTPase required for proper nuclear import of RNA polymerase II and III (RNAPII and RNAPIII). May act at an RNAP assembly step prior to nuclear import. In Yarrowia lipolytica (strain CLIB 122 / E 150) (Yeast), this protein is GPN-loop GTPase 3.